The sequence spans 370 residues: 3,7-dimethylxanthine N-methyltransferase CkTbS (370 aa).

Position 24 (Tyr-24) interacts with S-adenosyl-L-homocysteine. Theobromine is bound at residue Thr-31. S-adenosyl-L-homocysteine-binding residues include Cys-67, Asn-72, Asp-104, Leu-105, Ser-139, and Phe-140. Theobromine-binding residues include Tyr-157, His-160, and Trp-161. Residue Asn-178 coordinates Mg(2+). Residue His-226 participates in theobromine binding. The Mg(2+) site is built by Asp-264, Phe-266, and Asn-267. Residue Phe-322 participates in theobromine binding.

Belongs to the methyltransferase superfamily. Type-7 methyltransferase family. The cofactor is Mg(2+).

The enzyme catalyses 7-methylxanthine + S-adenosyl-L-methionine = theobromine + S-adenosyl-L-homocysteine + H(+). The protein operates within alkaloid biosynthesis. Its function is as follows. Involved in the biosynthesis of caffeine in cv. Puer. Involved in the biosynthesis of theacrine in cv. Kucha, a caffeine-like xanthine alkaloid with diverse beneficial biological activities including anti-depressive, sedative, and hypnotic activities, improving learning and memory, increasing exercise activity, and preventing nonalcoholic fatty liver disease. Catalyzes the conversion of 7-methylxanthine (7mX) to theobromine but not able to convert paraxanthine to caffeine. In Camellia sinensis var. assamica (Assam tea), this protein is 3,7-dimethylxanthine N-methyltransferase CkTbS.